A 106-amino-acid polypeptide reads, in one-letter code: 3-oxoacyl-[acyl-carrier-protein] reductase (106 aa).

Belongs to the short-chain dehydrogenases/reductases (SDR) family. In terms of assembly, homotetramer. As to expression, mesocarp.

It is found in the plastid. The protein localises to the chloroplast. The catalysed reaction is a (3R)-hydroxyacyl-[ACP] + NADP(+) = a 3-oxoacyl-[ACP] + NADPH + H(+). The protein operates within lipid metabolism; fatty acid biosynthesis. The sequence is that of 3-oxoacyl-[acyl-carrier-protein] reductase from Persea americana (Avocado).